The sequence spans 869 residues: MGNREMEELIPLVNRLQDAFSALGQSCLLELPQIAVVGGQSAGKSSVLENFVGRDFLPRGSGIVTRRPLVLQLVTSKAEYAEFLHCKGKKFTDFDEVRHEIEAETDRVTGMNKGISSVPINLRVYSPHVLNLTLIDLPGITKVPVGDQPPDIEYQIRDMIMQFITRENCLILAVTPANTDLANSDALKLAKEVDPQGLRTIGVITKLDLMDEGTDARDVLENKLLPLRRGYVGVVNRSQKDIDGKKDIKAAMLAERKFFLSHPAYRHIADRMGTPHLQKVLNQQLTNHIRDTLPNFRNKLQGQLLSIEHEVEAFKNFKPEDPTRKTKALLQMVQQFAVDFEKRIEGSGDQVDTLELSGGAKINRIFHERFPFEIVKMEFNEKELRREISYAIKNIHGIRTGLFTPDMAFEAIVKKQIVKLKGPSLKSVDLVMQELINTVKKCTKRLANFPRLCEETERIVANHIREREGKTKDQVLLLIDIQVSYINTNHEDFIGFANAQQRSSQVHKKSTIGNQGTNLPPSRQIVIRKGWLTVSNIGIMKGGSKGYWFVLTAESLSWYKDDEEKEKKYMLPLDNLKVRDVEKGFMSSKHVFALFNTEQRNVYKDYRSLELACDSQEDVDSWKASLLRAGVYPDKSFTENDENGQAENFSMDPQLERQVETIRNLVDSYMSIINKCIRDLIPKTIMHLMINNVKDFINSELLAQLYSSEDQNTLMEESVEQAQRRDEMLRMYQALKEALAIIGDINTVTVSTPAPPPVDDSWLQHSRRSPPPSPTTQRRLTLSAPLPRPASSRGPAPAIPSPGPHSGAPPVPFRPGPLPPFPNSSDSYGAPPQVPSRPTRAPPSVPSRRPPPSPTRPTIIRPLESSLLD.

In terms of domain architecture, Dynamin-type G spans 28 to 294 (LLELPQIAVV…LTNHIRDTLP (267 aa)). The segment at 38–45 (GGQSAGKS) is G1 motif. Residue 38–46 (GGQSAGKSS) coordinates GTP. The interval 64–66 (VTR) is G2 motif. The interval 136 to 139 (DLPG) is G3 motif. A G4 motif region spans residues 205-208 (TKLD). 205-211 (TKLDLMD) serves as a coordination point for GTP. Tyr-231 carries the phosphotyrosine modification. Positions 235 to 238 (VNRS) are G5 motif. GTP is bound at residue 236–239 (NRSQ). The residue at position 299 (Lys-299) is an N6-acetyllysine. The 107-residue stretch at 525–631 (IVIRKGWLTV…WKASLLRAGV (107 aa)) folds into the PH domain. Tyr-603 carries the post-translational modification Phosphotyrosine. An N6-acetyllysine modification is found at Lys-604. The GED domain maps to 659–750 (VETIRNLVDS…IIGDINTVTV (92 aa)). Residues 752–869 (TPAPPPVDDS…IRPLESSLLD (118 aa)) form a disordered region. Phosphoserine occurs at positions 769 and 773. Positions 775–796 (TTQRRLTLSAPLPRPASSRGPA) are enriched in low complexity. 2 stretches are compositionally biased toward pro residues: residues 797 to 822 (PAIPSPGPHSGAPPVPFRPGPLPPFP) and 832 to 855 (PQVPSRPTRAPPSVPSRRPPPSPT). The residue at position 853 (Ser-853) is a Phosphoserine.

It belongs to the TRAFAC class dynamin-like GTPase superfamily. Dynamin/Fzo/YdjA family. Isoform-specific expression in germ-cell-depleted testis (Sertoli cells), brain (peripheral sensory neurons), lung and heart.

The protein resides in the cytoplasm. It is found in the cytoskeleton. Its subcellular location is the cytoplasmic vesicle. It localises to the golgi apparatus. It carries out the reaction GTP + H2O = GDP + phosphate + H(+). In terms of biological role, microtubule-associated force-producing protein involved in producing microtubule bundles and able to bind and hydrolyze GTP. Most probably involved in vesicular trafficking processes, in particular endocytosis. This is Dynamin-3 (Dnm3) from Rattus norvegicus (Rat).